The chain runs to 72 residues: Alpha-conotoxin SII (72 aa).

The N-terminal stretch at 1-21 is a signal peptide; sequence MGMRMMFTVFLLVVLATTVVS. A propeptide spanning residues 22–50 is cleaved from the precursor; the sequence is FPSDRASDGRDDEAKDERSDMHESDRNGR. The tract at residues 23-51 is disordered; it reads PSDRASDGRDDEAKDERSDMHESDRNGRG. Residues 26 to 49 are compositionally biased toward basic and acidic residues; it reads RASDGRDDEAKDERSDMHESDRNG. Cystine bridges form between cysteine 52-cysteine 68, cysteine 53-cysteine 58, and cysteine 54-cysteine 64. Positions 70-72 are excised as a propeptide; it reads RTL.

This sequence belongs to the conotoxin A superfamily. The disulfide bond Cys-52-Cys-68 (Cys I-VI), which corresponds to an extra disulfide bond when compared to the cysteine framework I (CC-C-C), does contribute to conotoxin SII stability and imparts a unique binding mode at the nAChR. In terms of tissue distribution, expressed by the venom duct.

Its subcellular location is the secreted. Functionally, alpha-conotoxins act on postsynaptic membranes, they bind to the nicotinic acetylcholine receptors (nAChR) and thus inhibit them. This toxin potently inhibits the rodent muscle nAChR (IC(50)=120 nM (adult subtype, alpha-1-beta-1-delta-epsilon/CHRNA1-CHRNB1-CHRND-CHRNE) and IC(50)=370 nM (fetal subtype, alpha-1-beta-1-gamma-delta/CHRNA1-CHRNB1-CHRNG-CHRND)) and weakly inhibits neuronal nAChRs. In contrast to alpha-conotoxins bearing 2 disulfide bonds (framework I), this conotoxin acts via a unique binding mode with the helix and the N- and C-termini buried in the binding pocket of muscle nAChRs. In Conus striatus (Striated cone), this protein is Alpha-conotoxin SII.